We begin with the raw amino-acid sequence, 558 residues long: Polypeptide N-acetylgalactosaminyltransferase 16 (558 aa).

Residues 1–6 (MRKIRA) are Cytoplasmic-facing. Residues 7–26 (NAIAILTVAWILGTFYYLWQ) form a helical; Signal-anchor for type II membrane protein membrane-spanning segment. Residues 27–558 (DNRAHAASSS…AQQWQLLPHT (532 aa)) lie on the Lumenal side of the membrane. The segment covering 34–46 (SSSGRGAQRAGGR) has biased composition (low complexity). The disordered stretch occupies residues 34–53 (SSSGRGAQRAGGRPEQLRED). Cystine bridges form between C113–C340, C331–C409, C441–C460, C486–C506, and C530–C543. Residues 122–227 (LPATSVIITF…VEWLQPMLQR (106 aa)) form a catalytic subdomain A region. Residues D163 and R188 each contribute to the substrate site. Residue D211 participates in Mn(2+) binding. Residue S212 coordinates substrate. H213 serves as a coordination point for Mn(2+). A catalytic subdomain B region spans residues 286-348 (PIRTPVIAGG…PCSRVGHVFR (63 aa)). A substrate-binding site is contributed by W317. H345 is a Mn(2+) binding site. Residues R348, H351, and Y353 each coordinate substrate. The region spanning 428 to 555 (KEVLPGVIKQ…DAQAQQWQLL (128 aa)) is the Ricin B-type lectin domain.

The protein belongs to the glycosyltransferase 2 family. GalNAc-T subfamily. It depends on Mn(2+) as a cofactor. In terms of tissue distribution, in the CNS, it is predominantly expressed in several distinct hypothalamic, thalamic and amygdaloid nuclei. The most abundant level of expression is in the paraventricular, ventromedial and arcuate nuclei of the hypothalamus, the anterodorsal and parafascicular nuclei of the thalamus and the central, basomedial and medial nuclei of the amygdala. Also expressed in cerebral cortex, lateral septum, habenula and hippocampus.

The protein resides in the golgi apparatus membrane. It catalyses the reaction L-seryl-[protein] + UDP-N-acetyl-alpha-D-galactosamine = a 3-O-[N-acetyl-alpha-D-galactosaminyl]-L-seryl-[protein] + UDP + H(+). The catalysed reaction is L-threonyl-[protein] + UDP-N-acetyl-alpha-D-galactosamine = a 3-O-[N-acetyl-alpha-D-galactosaminyl]-L-threonyl-[protein] + UDP + H(+). It participates in protein modification; protein glycosylation. Functionally, catalyzes the initial reaction in O-linked oligosaccharide biosynthesis, the transfer of an N-acetyl-D-galactosamine residue to a serine or threonine residue on the protein receptor. In Mus musculus (Mouse), this protein is Polypeptide N-acetylgalactosaminyltransferase 16 (Galnt16).